Here is a 733-residue protein sequence, read N- to C-terminus: Folic acid synthesis protein fol1 (733 aa).

DHNA regions lie at residues 55-167 and 179-277; these read VVVE…YAER and IEFS…QIYR. A Phosphotyrosine modification is found at Tyr281. Positions 295–454 are HPK; it reads NKIAYLSFGS…LPSQGIRLYS (160 aa). The region spanning 465–724 is the Pterin-binding domain; that stretch reads ALTMGILNVT…DTKEMSKVVG (260 aa). The segment at 467–733 is DHPS; it reads TMGILNVTPD…GMANAIRYVP (267 aa). Asn472 provides a ligand contact to Mg(2+). Residues Thr511, Asp546, Asn565, Asp637, Lys677, and 712-714 contribute to the (7,8-dihydropterin-6-yl)methyl diphosphate site; that span reads RVH.

It in the N-terminal section; belongs to the DHNA family. In the central section; belongs to the HPPK family. This sequence in the C-terminal section; belongs to the DHPS family. It depends on Mg(2+) as a cofactor.

Its subcellular location is the cytoplasm. It catalyses the reaction 7,8-dihydroneopterin = 6-hydroxymethyl-7,8-dihydropterin + glycolaldehyde. The enzyme catalyses 6-hydroxymethyl-7,8-dihydropterin + ATP = (7,8-dihydropterin-6-yl)methyl diphosphate + AMP + H(+). It carries out the reaction (7,8-dihydropterin-6-yl)methyl diphosphate + 4-aminobenzoate = 7,8-dihydropteroate + diphosphate. It participates in cofactor biosynthesis; tetrahydrofolate biosynthesis; 2-amino-4-hydroxy-6-hydroxymethyl-7,8-dihydropteridine diphosphate from 7,8-dihydroneopterin triphosphate: step 3/4. Its pathway is cofactor biosynthesis; tetrahydrofolate biosynthesis; 2-amino-4-hydroxy-6-hydroxymethyl-7,8-dihydropteridine diphosphate from 7,8-dihydroneopterin triphosphate: step 4/4. The protein operates within cofactor biosynthesis; tetrahydrofolate biosynthesis; 7,8-dihydrofolate from 2-amino-4-hydroxy-6-hydroxymethyl-7,8-dihydropteridine diphosphate and 4-aminobenzoate: step 1/2. Functionally, catalyzes three sequential steps of tetrahydrofolate biosynthesis. The polypeptide is Folic acid synthesis protein fol1 (fol1) (Schizosaccharomyces pombe (strain 972 / ATCC 24843) (Fission yeast)).